The primary structure comprises 601 residues: Elongation factor 4 (601 aa).

Residues 7–189 (DNIRNFSIVA…AIVKRLPPPK (183 aa)) form the tr-type G domain. GTP-binding positions include 19 to 24 (DHGKST) and 136 to 139 (NKVD).

This sequence belongs to the TRAFAC class translation factor GTPase superfamily. Classic translation factor GTPase family. LepA subfamily.

The protein resides in the cell inner membrane. It carries out the reaction GTP + H2O = GDP + phosphate + H(+). Its function is as follows. Required for accurate and efficient protein synthesis under certain stress conditions. May act as a fidelity factor of the translation reaction, by catalyzing a one-codon backward translocation of tRNAs on improperly translocated ribosomes. Back-translocation proceeds from a post-translocation (POST) complex to a pre-translocation (PRE) complex, thus giving elongation factor G a second chance to translocate the tRNAs correctly. Binds to ribosomes in a GTP-dependent manner. This Methylorubrum populi (strain ATCC BAA-705 / NCIMB 13946 / BJ001) (Methylobacterium populi) protein is Elongation factor 4.